A 279-amino-acid chain; its full sequence is Putative methyltransferase Jann_4284 (279 aa).

The protein is Putative methyltransferase Jann_4284 of Jannaschia sp. (strain CCS1).